The sequence spans 339 residues: Cathepsin B (339 aa).

Positions 1-17 are cleaved as a signal peptide; sequence MWQLWASLCCLLALADA. Positions 18 to 79 are cleaved as a propeptide — activation peptide; sequence RSRPSFHPLS…QRVMFTEDLK (62 aa). 6 cysteine pairs are disulfide-bonded: C93/C122, C105/C150, C141/C207, C142/C146, C179/C211, and C187/C198. The active site involves C108. An N-linked (GlcNAc...) asparagine glycan is attached at N192. Position 220 is an N6-acetyllysine (K220). Residues H278 and N298 contribute to the active site. The propeptide occupies 334-339; it reads QYWEKI.

Belongs to the peptidase C1 family. In terms of assembly, dimer of a heavy chain and a light chain cross-linked by a disulfide bond. Interacts with SRPX2. Directly interacts with SHKBP1.

It localises to the lysosome. It is found in the melanosome. Its subcellular location is the secreted. The protein localises to the extracellular space. The protein resides in the apical cell membrane. It carries out the reaction Hydrolysis of proteins with broad specificity for peptide bonds. Preferentially cleaves -Arg-Arg-|-Xaa bonds in small molecule substrates (thus differing from cathepsin L). In addition to being an endopeptidase, shows peptidyl-dipeptidase activity, liberating C-terminal dipeptides.. Thiol protease which is believed to participate in intracellular degradation and turnover of proteins. Cleaves matrix extracellular phosphoglycoprotein MEPE. Involved in the solubilization of cross-linked TG/thyroglobulin in the thyroid follicle lumen. Has also been implicated in tumor invasion and metastasis. The sequence is that of Cathepsin B (CTSB) from Pongo abelii (Sumatran orangutan).